Reading from the N-terminus, the 486-residue chain is Phosphomethylpyrimidine synthase (486 aa).

Substrate-binding positions include Asn80, Met109, Tyr139, His175, 195 to 197, 236 to 239, and Glu275; these read SRG and DSLR. Zn(2+) is bound at residue His279. Residue Tyr329 participates in substrate binding. Residue His370 coordinates Zn(2+). [4Fe-4S] cluster-binding residues include Cys450, Cys453, and Cys458.

Belongs to the ThiC family. Requires [4Fe-4S] cluster as cofactor.

The catalysed reaction is 5-amino-1-(5-phospho-beta-D-ribosyl)imidazole + S-adenosyl-L-methionine = 4-amino-2-methyl-5-(phosphooxymethyl)pyrimidine + CO + 5'-deoxyadenosine + formate + L-methionine + 3 H(+). The protein operates within cofactor biosynthesis; thiamine diphosphate biosynthesis. Functionally, catalyzes the synthesis of the hydroxymethylpyrimidine phosphate (HMP-P) moiety of thiamine from aminoimidazole ribotide (AIR) in a radical S-adenosyl-L-methionine (SAM)-dependent reaction. The polypeptide is Phosphomethylpyrimidine synthase (Trichodesmium erythraeum (strain IMS101)).